The chain runs to 496 residues: NADP-dependent glyceraldehyde-3-phosphate dehydrogenase (496 aa).

Alanine 2 is subject to N-acetylalanine. Threonine 4 is modified (phosphothreonine). Substrate is bound by residues arginine 116 and 169-170 (NY). The NADP(+) site is built by lysine 192, threonine 195, and aspartate 230. 245 to 249 (GGDTG) lines the NAD(+) pocket. Catalysis depends on glutamate 264, which acts as the Proton acceptor. Residue 297–299 (RCT) participates in substrate binding. The active-site Nucleophile is the cysteine 298. Position 391 (glutamate 391) interacts with NADP(+). Arginine 451 is a binding site for substrate.

The protein belongs to the aldehyde dehydrogenase family.

The protein localises to the cytoplasm. It catalyses the reaction D-glyceraldehyde 3-phosphate + NADP(+) + H2O = (2R)-3-phosphoglycerate + NADPH + 2 H(+). Functionally, important as a means of generating NADPH for biosynthetic reactions. The polypeptide is NADP-dependent glyceraldehyde-3-phosphate dehydrogenase (ALDH11A3) (Arabidopsis thaliana (Mouse-ear cress)).